A 258-amino-acid chain; its full sequence is Chaperone protein FaeE (258 aa).

Residues 1 to 34 (MSKRNAVTTFFTNRVTKALGMTLALMMTCQSAMA) form the signal peptide. A disordered region spans residues 239–258 (KKPAAPEAAKAEKADTAEQK). Residues 247 to 258 (AKAEKADTAEQK) show a composition bias toward basic and acidic residues.

It belongs to the periplasmic pilus chaperone family.

Its subcellular location is the periplasm. Its function is as follows. Mediates assembly of pili by forming soluble multimeric complexes with pili subunits as an intermediate step in the assembly process. This protein is involved in K88 pili assembly. Protects pilin protein from proteolytic degradation by DegP and from premature polymerization. The protein is Chaperone protein FaeE (faeE) of Escherichia coli.